Here is a 103-residue protein sequence, read N- to C-terminus: Large ribosomal subunit protein uL23 (103 aa).

The protein belongs to the universal ribosomal protein uL23 family. Part of the 50S ribosomal subunit. Contacts protein L29, and trigger factor when it is bound to the ribosome.

One of the early assembly proteins it binds 23S rRNA. One of the proteins that surrounds the polypeptide exit tunnel on the outside of the ribosome. Forms the main docking site for trigger factor binding to the ribosome. This chain is Large ribosomal subunit protein uL23, found in Prochlorococcus marinus (strain NATL1A).